Here is a 279-residue protein sequence, read N- to C-terminus: Large ribosomal subunit protein uL2 (279 aa).

The disordered stretch occupies residues 224-279 (AMNAVDHPMGGGRGHSKGGNIPRSPWNQPSRGLKTRPKKSWDWMIVSDRRKNKAGK).

Belongs to the universal ribosomal protein uL2 family. Part of the 50S ribosomal subunit. Forms a bridge to the 30S subunit in the 70S ribosome.

One of the primary rRNA binding proteins. Required for association of the 30S and 50S subunits to form the 70S ribosome, for tRNA binding and peptide bond formation. It has been suggested to have peptidyltransferase activity; this is somewhat controversial. Makes several contacts with the 16S rRNA in the 70S ribosome. The chain is Large ribosomal subunit protein uL2 from Elusimicrobium minutum (strain Pei191).